The chain runs to 677 residues: Methionine--tRNA ligase (677 aa).

Residues 15 to 25 (PYANGSIHLGH) carry the 'HIGH' region motif. 4 residues coordinate Zn(2+): Cys-146, Cys-149, Cys-159, and Cys-162. The 'KMSKS' region signature appears at 333–337 (KMSKS). Lys-336 contributes to the ATP binding site. Positions 575–677 (DFAKVDLRVA…DGAKPGQQVK (103 aa)) constitute a tRNA-binding domain.

Belongs to the class-I aminoacyl-tRNA synthetase family. MetG type 1 subfamily. Homodimer. Zn(2+) is required as a cofactor.

It localises to the cytoplasm. The enzyme catalyses tRNA(Met) + L-methionine + ATP = L-methionyl-tRNA(Met) + AMP + diphosphate. Is required not only for elongation of protein synthesis but also for the initiation of all mRNA translation through initiator tRNA(fMet) aminoacylation. The chain is Methionine--tRNA ligase from Klebsiella pneumoniae (strain 342).